Here is a 189-residue protein sequence, read N- to C-terminus: RxLR effector protein CRE18 (189 aa).

The first 23 residues, 1-23 (MSKLFYAFAVLAVHVLTSSPTTA), serve as a signal peptide directing secretion. The short motif at 47–68 (RFLRSIHEGEDSLKPSAFSEER) is the RxLR-dEER element.

Belongs to the RxLR effector family.

It is found in the secreted. It localises to the host cytoplasm. The protein resides in the host nucleus. Its function is as follows. Effector that is involved in host plant infection. Contributes to virulence during the early infection stage, by inhibiting plant defense responses induced by both PAMP-triggered immunity (PTI) and effector-triggered immunity (ETI). In Phytophthora infestans (strain T30-4) (Potato late blight agent), this protein is RxLR effector protein CRE18.